The sequence spans 452 residues: Tubulin beta-2 chain (452 aa).

Residues glutamine 11, glutamate 74, serine 143, valine 147, threonine 148, glycine 149, asparagine 209, and asparagine 231 each coordinate GTP. Glutamate 74 lines the Mg(2+) pocket. The disordered stretch occupies residues 431–452; that stretch reads QEATADDEAEFEEEGEVEGEYD. Positions 434-452 are enriched in acidic residues; the sequence is TADDEAEFEEEGEVEGEYD.

Belongs to the tubulin family. In terms of assembly, dimer of alpha and beta chains. A typical microtubule is a hollow water-filled tube with an outer diameter of 25 nm and an inner diameter of 15 nM. Alpha-beta heterodimers associate head-to-tail to form protofilaments running lengthwise along the microtubule wall with the beta-tubulin subunit facing the microtubule plus end conferring a structural polarity. Microtubules usually have 13 protofilaments but different protofilament numbers can be found in some organisms and specialized cells. Mg(2+) is required as a cofactor.

It is found in the cytoplasm. The protein localises to the cytoskeleton. Tubulin is the major constituent of microtubules, a cylinder consisting of laterally associated linear protofilaments composed of alpha- and beta-tubulin heterodimers. Microtubules grow by the addition of GTP-tubulin dimers to the microtubule end, where a stabilizing cap forms. Below the cap, tubulin dimers are in GDP-bound state, owing to GTPase activity of alpha-tubulin. This chain is Tubulin beta-2 chain, found in Homarus americanus (American lobster).